We begin with the raw amino-acid sequence, 266 residues long: Isoprenyl transferase (266 aa).

Asp36 is an active-site residue. Position 36 (Asp36) interacts with Mg(2+). Residues 37-40 (GNGR), Trp41, Arg49, His53, and 81-83 (STE) contribute to the substrate site. Residue Asn84 is the Proton acceptor of the active site. Residues Trp85, Arg87, Arg204, and 210–212 (RIS) contribute to the substrate site. Glu223 contributes to the Mg(2+) binding site.

Belongs to the UPP synthase family. In terms of assembly, homodimer. Requires Mg(2+) as cofactor.

In terms of biological role, catalyzes the condensation of isopentenyl diphosphate (IPP) with allylic pyrophosphates generating different type of terpenoids. The protein is Isoprenyl transferase of Prochlorococcus marinus (strain SARG / CCMP1375 / SS120).